A 329-amino-acid chain; its full sequence is Interleukin-12 subunit beta (329 aa).

A signal peptide spans 1 to 22 (MCHQWLVLSWFSLVLLASPLMA). The region spanning 29–106 (DVYVVELDWY…LSHSHLLLHK (78 aa)) is the Ig-like C2-type domain. Cys50 and Cys90 are oxidised to a cystine. 3 N-linked (GlcNAc...) asparagine glycosylation sites follow: Asn125, Asn135, and Asn223. The Fibronectin type-III domain occupies 238–329 (PPKNLQLKPL…WSEWASVSCS (92 aa)).

Belongs to the IL-12B family. In terms of assembly, heterodimer with IL12A; disulfide-linked. The heterodimer is known as interleukin IL-12. Heterodimer with IL23A; disulfide-linked. The heterodimer is known as interleukin IL-23. Also secreted as a monomer. Interacts with NBR1; this interaction promotes IL-12 secretion.

The protein resides in the secreted. Cytokine that can act as a growth factor for activated T and NK cells, enhance the lytic activity of NK/lymphokine-activated killer cells, and stimulate the production of IFN-gamma by resting PBMC. In terms of biological role, associates with IL23A to form the IL-23 interleukin, a heterodimeric cytokine which functions in innate and adaptive immunity. IL-23 may constitute with IL-17 an acute response to infection in peripheral tissues. IL-23 binds to a heterodimeric receptor complex composed of IL12RB1 and IL23R, activates the Jak-Stat signaling cascade, stimulates memory rather than naive T-cells and promotes production of pro-inflammatory cytokines. IL-23 induces autoimmune inflammation and thus may be responsible for autoimmune inflammatory diseases and may be important for tumorigenesis. This chain is Interleukin-12 subunit beta (IL12B), found in Equus caballus (Horse).